A 156-amino-acid polypeptide reads, in one-letter code: Cyanate hydratase (156 aa).

Active-site residues include Arg96, Glu99, and Ser122.

This sequence belongs to the cyanase family.

The catalysed reaction is cyanate + hydrogencarbonate + 3 H(+) = NH4(+) + 2 CO2. Functionally, catalyzes the reaction of cyanate with bicarbonate to produce ammonia and carbon dioxide. The protein is Cyanate hydratase of Photorhabdus laumondii subsp. laumondii (strain DSM 15139 / CIP 105565 / TT01) (Photorhabdus luminescens subsp. laumondii).